Consider the following 435-residue polypeptide: Xylose isomerase (435 aa).

Catalysis depends on residues histidine 100 and aspartate 103. Mg(2+) is bound by residues glutamate 231, glutamate 267, histidine 270, aspartate 295, aspartate 306, aspartate 308, and aspartate 338.

This sequence belongs to the xylose isomerase family. Homotetramer. Mg(2+) serves as cofactor.

Its subcellular location is the cytoplasm. It catalyses the reaction alpha-D-xylose = alpha-D-xylulofuranose. In Brucella ovis (strain ATCC 25840 / 63/290 / NCTC 10512), this protein is Xylose isomerase.